The primary structure comprises 486 residues: UDP-N-acetylmuramate--L-alanine ligase (486 aa).

Residue 126–132 coordinates ATP; it reads GTHGKTS.

The protein belongs to the MurCDEF family.

The protein resides in the cytoplasm. The catalysed reaction is UDP-N-acetyl-alpha-D-muramate + L-alanine + ATP = UDP-N-acetyl-alpha-D-muramoyl-L-alanine + ADP + phosphate + H(+). It participates in cell wall biogenesis; peptidoglycan biosynthesis. Cell wall formation. This Corynebacterium glutamicum (strain R) protein is UDP-N-acetylmuramate--L-alanine ligase.